Reading from the N-terminus, the 692-residue chain is Highly divergent homeobox (692 aa).

The homeobox 1 DNA-binding region spans 3–63; that stretch reads LRSVFTVEQQ…NKRRKMSSKS (61 aa). The segment covering 117–133 has biased composition (polar residues); the sequence is SSSSKQGTTKHTNTQIT. The tract at residues 117–136 is disordered; it reads SSSSKQGTTKHTNTQITEAH. Residues K137, K142, K146, K165, K174, K196, K214, K223, and K234 each participate in a glycyl lysine isopeptide (Lys-Gly) (interchain with G-Cter in SUMO2) cross-link. The segment at residues 437–500 is a DNA-binding region (homeobox 2); it reads ALQDRTQFSD…NRRRKYRLMG (64 aa). Disordered regions lie at residues 505-541 and 647-692; these read PPRGGPADFSEQPESGSLSALTPGEEAGPEVGEDNDR and KDQQ…SDSL. The segment covering 676–692 has biased composition (polar residues); it reads TSLSVSSLSEKNASDSL.

It is found in the nucleus. The protein is Highly divergent homeobox (Hdx) of Mus musculus (Mouse).